We begin with the raw amino-acid sequence, 197 residues long: Putative AgrB-like protein (197 aa).

4 helical membrane-spanning segments follow: residues 29 to 49, 79 to 99, 102 to 122, and 143 to 163; these read FGFT…AVGL, SIGC…VPFA, YAWI…APYY, and ILIV…LVLG.

This sequence belongs to the AgrB family.

Its subcellular location is the cell membrane. Its function is as follows. May be involved in the proteolytic processing of a quorum sensing system signal molecule precursor. The chain is Putative AgrB-like protein from Halalkalibacterium halodurans (strain ATCC BAA-125 / DSM 18197 / FERM 7344 / JCM 9153 / C-125) (Bacillus halodurans).